The sequence spans 1155 residues: Alpha,alpha-trehalose-phosphate synthase [UDP-forming] 1 (1155 aa).

The disordered stretch occupies residues Leu-56–Glu-94. The span at Ser-63–Ser-72 shows a compositional bias: low complexity.

It in the N-terminal section; belongs to the glycosyltransferase 20 family. The protein in the C-terminal section; belongs to the gob-1 trehalose phosphatase family.

The catalysed reaction is D-glucose 6-phosphate + UDP-alpha-D-glucose = alpha,alpha-trehalose 6-phosphate + UDP + H(+). Functionally, catalyzes the production of trehalose from glucose-6-phosphate and UDP-alpha-D-glucose in a 2 step process. This is Alpha,alpha-trehalose-phosphate synthase [UDP-forming] 1 (tps-1) from Aphelenchoides avenae (Mycophagous nematode worm).